Consider the following 196-residue polypeptide: Adenylate kinase (196 aa).

9-17 contributes to the ATP binding site; it reads GIPGVGKST.

Belongs to the archaeal adenylate kinase family.

It is found in the cytoplasm. It catalyses the reaction AMP + ATP = 2 ADP. This is Adenylate kinase from Thermococcus sibiricus (strain DSM 12597 / MM 739).